We begin with the raw amino-acid sequence, 174 residues long: Co-chaperone protein HscB (174 aa).

The J domain occupies 2–74 (DYFTLFGLPA…LKRAEYMLSL (73 aa)).

Belongs to the HscB family. In terms of assembly, interacts with HscA and stimulates its ATPase activity. Interacts with IscU.

Its function is as follows. Co-chaperone involved in the maturation of iron-sulfur cluster-containing proteins. Seems to help targeting proteins to be folded toward HscA. This is Co-chaperone protein HscB from Yersinia pestis bv. Antiqua (strain Antiqua).